We begin with the raw amino-acid sequence, 95 residues long: Defensin-like protein 247 (95 aa).

Residues 1 to 24 (MKFAAIFLVTCVFFSLFSSNLSQG) form the signal peptide. Disulfide bonds link Cys37–Cys94, Cys48–Cys77, Cys56–Cys87, and Cys75–Cys89.

This sequence belongs to the DEFL family.

Its subcellular location is the secreted. The polypeptide is Defensin-like protein 247 (SCRL6) (Arabidopsis thaliana (Mouse-ear cress)).